A 512-amino-acid chain; its full sequence is FAD-linked oxidoreductase iacH (512 aa).

A signal peptide spans 1-22; sequence MVSLKACVVAYGFTLLPALVSG. N-linked (GlcNAc...) asparagine glycosylation is found at asparagine 39, asparagine 55, asparagine 69, asparagine 210, asparagine 217, asparagine 278, asparagine 295, and asparagine 367. Residues 77–248 enclose the FAD-binding PCMH-type domain; the sequence is LDTPDVQLVV…TSLEKKIYPG (172 aa).

The protein belongs to the oxygen-dependent FAD-linked oxidoreductase family. Requires FAD as cofactor.

Its pathway is secondary metabolite biosynthesis. FAD-linked oxidoreductase; part of the gene cluster that mediates the biosynthesis of iso-A82775C, a enylepoxycyclohexane and biosynthetic precursor of the chloropestolide anticancer natural products. Within the cluster, the prenyltransferase iacE prenylates siccayne to generate pestalodiol E, using dimethylallyl diphosphate (DMAPP) as cosubstrate. The probable oxidoreductase iacF is then involved in the epoxidation of pestalodiol F to pestalodiol F, which is further converted to pestalofone A by the short-chain dehydrogenase/reductase iacG. Iso-A82775C is subsequently generated from pestalofone A by the short-chain dehydrogenase/reductase iacC. Iso-A82775C is further condensed with maldoxin via a Diels-Alder reaction to produce the anticancer natural products chloropestolides A to E. The protein is FAD-linked oxidoreductase iacH of Pestalotiopsis fici (strain W106-1 / CGMCC3.15140).